We begin with the raw amino-acid sequence, 355 residues long: Ribosomal RNA large subunit methyltransferase M (355 aa).

S-adenosyl-L-methionine contacts are provided by residues S183, 216 to 219 (SPGG), D235, D255, and D271. The active-site Proton acceptor is the K300.

It belongs to the class I-like SAM-binding methyltransferase superfamily. RNA methyltransferase RlmE family. RlmM subfamily. Monomer.

Its subcellular location is the cytoplasm. It carries out the reaction cytidine(2498) in 23S rRNA + S-adenosyl-L-methionine = 2'-O-methylcytidine(2498) in 23S rRNA + S-adenosyl-L-homocysteine + H(+). Functionally, catalyzes the 2'-O-methylation at nucleotide C2498 in 23S rRNA. This Pseudomonas putida (strain W619) protein is Ribosomal RNA large subunit methyltransferase M.